The primary structure comprises 269 residues: MELLIKAFIMGIVEGLTEFLPISSTGHLIIVGKFIHFTGNFATMFEIVIQLGAILAVVFYYRKKIFASLKNLKPGSWGFNLWFKIFIAFIPAAVIGLLTHKYIEEHLFSPFTVAIALIAGAIMMIVIEDTFGKRYKIDNMDKVDTKKSLLIGIAQVMSLFPGMSRSASTIMGGMLAGLSVKAAAEFSFFLAIPTMFAATTLSLLKGFSAMSLLEWQALAVGFITSFLTALFVVDKFLPYLTRHSLKPFAYYRLAVGVLMILLVAEKIVK.

8 consecutive transmembrane segments (helical) span residues 3 to 23 (LLIKAFIMGIVEGLTEFLPIS), 41 to 61 (FATMFEIVIQLGAILAVVFYY), 78 to 98 (GFNLWFKIFIAFIPAAVIGLL), 107 to 127 (LFSPFTVAIALIAGAIMMIVI), 148 to 167 (SLLIGIAQVMSLFPGMSRSA), 184 to 204 (AEFSFFLAIPTMFAATTLSLL), 213 to 233 (LEWQALAVGFITSFLTALFVV), and 248 to 268 (FAYYRLAVGVLMILLVAEKIV).

This sequence belongs to the UppP family.

It localises to the cell membrane. It carries out the reaction di-trans,octa-cis-undecaprenyl diphosphate + H2O = di-trans,octa-cis-undecaprenyl phosphate + phosphate + H(+). Its function is as follows. Catalyzes the dephosphorylation of undecaprenyl diphosphate (UPP). Confers resistance to bacitracin. This is Undecaprenyl-diphosphatase from Thermoanaerobacter sp. (strain X514).